Consider the following 269-residue polypeptide: Diaminopimelate epimerase (269 aa).

Substrate-binding residues include Asn-20 and Asn-63. Cys-72 acts as the Proton donor in catalysis. Substrate contacts are provided by residues 73-74 (GN), Asn-179, and 197-198 (ER). The active-site Proton acceptor is Cys-207. 208 to 209 (GT) serves as a coordination point for substrate.

Belongs to the diaminopimelate epimerase family. Homodimer.

The protein resides in the cytoplasm. The catalysed reaction is (2S,6S)-2,6-diaminopimelate = meso-2,6-diaminopimelate. It functions in the pathway amino-acid biosynthesis; L-lysine biosynthesis via DAP pathway; DL-2,6-diaminopimelate from LL-2,6-diaminopimelate: step 1/1. Catalyzes the stereoinversion of LL-2,6-diaminopimelate (L,L-DAP) to meso-diaminopimelate (meso-DAP), a precursor of L-lysine and an essential component of the bacterial peptidoglycan. The polypeptide is Diaminopimelate epimerase (Chlamydia muridarum (strain MoPn / Nigg)).